The chain runs to 108 residues: uncharacterized protein (108 aa).

2 consecutive transmembrane segments (helical) span residues 32-52 (YFFFLLFCKLLNAAEAPLLAI) and 68-88 (SYLLLLITMLEGAEYFSLVVG).

It localises to the membrane. This is an uncharacterized protein from Saccharomyces cerevisiae (strain ATCC 204508 / S288c) (Baker's yeast).